The chain runs to 246 residues: Protein lin-37 homolog (246 aa).

Residue methionine 1 is modified to N-acetylmethionine. Residues lysine 5 and lysine 7 each participate in a glycyl lysine isopeptide (Lys-Gly) (interchain with G-Cter in SUMO2) cross-link. Over residues 39–55 (RLDEEAGKTPLDTHNKD) the composition is skewed to basic and acidic residues. 2 disordered regions span residues 39–90 (RLDE…GGPQ) and 129–208 (VRER…TLIY). Residues serine 135 and serine 138 each carry the phosphoserine modification. A Phosphothreonine modification is found at threonine 167. 2 positions are modified to phosphoserine: serine 182 and serine 202.

In terms of assembly, component of the DREAM complex (also named LINC complex) at least composed of E2F4, E2F5, LIN9, LIN37, LIN52, LIN54, MYBL1, MYBL2, RBL1, RBL2, RBBP4, TFDP1 and TFDP2. The complex exists in quiescent cells where it represses cell cycle-dependent genes. It dissociates in S phase when LIN9, LIN37, LIN52 and LIN54 form a subcomplex that binds to MYBL2.

In Mus musculus (Mouse), this protein is Protein lin-37 homolog (Lin37).